Reading from the N-terminus, the 99-residue chain is MSATQKDPRDIIIAPVVSEKSYGLIDQGKYTFIVDPRSNKTEIKLAIEKIFGVQVASVNTLNKQGKTRRTKFGMGKRKDTKRAIVSLKSGSIDIFTTVG.

This sequence belongs to the universal ribosomal protein uL23 family. As to quaternary structure, part of the 50S ribosomal subunit. Contacts protein L29, and trigger factor when it is bound to the ribosome.

One of the early assembly proteins it binds 23S rRNA. One of the proteins that surrounds the polypeptide exit tunnel on the outside of the ribosome. Forms the main docking site for trigger factor binding to the ribosome. This is Large ribosomal subunit protein uL23 from Clavibacter michiganensis subsp. michiganensis (strain NCPPB 382).